A 392-amino-acid polypeptide reads, in one-letter code: Acetyl-CoA acetyltransferase (392 aa).

Cys87 (acyl-thioester intermediate) is an active-site residue. Residues His348 and Cys378 each act as proton acceptor in the active site.

This sequence belongs to the thiolase-like superfamily. Thiolase family.

The protein resides in the cytoplasm. The catalysed reaction is 2 acetyl-CoA = acetoacetyl-CoA + CoA. Its pathway is metabolic intermediate biosynthesis; (R)-mevalonate biosynthesis; (R)-mevalonate from acetyl-CoA: step 1/3. Its function is as follows. Involved in the production of polyhydroxyalkonic acids (PHAs), composed primarily of 3-hydroxybutyric acid (3HB) and 3-hydroxyvaleric acid (3HV). The chain is Acetyl-CoA acetyltransferase (phaA) from Chromobacterium violaceum (strain ATCC 12472 / DSM 30191 / JCM 1249 / CCUG 213 / NBRC 12614 / NCIMB 9131 / NCTC 9757 / MK).